The following is a 325-amino-acid chain: 5-dehydro-2-deoxygluconokinase (325 aa).

The protein belongs to the carbohydrate kinase PfkB family.

The enzyme catalyses 5-dehydro-2-deoxy-D-gluconate + ATP = 6-phospho-5-dehydro-2-deoxy-D-gluconate + ADP + H(+). It functions in the pathway polyol metabolism; myo-inositol degradation into acetyl-CoA; acetyl-CoA from myo-inositol: step 5/7. In terms of biological role, catalyzes the phosphorylation of 5-dehydro-2-deoxy-D-gluconate (2-deoxy-5-keto-D-gluconate or DKG) to 6-phospho-5-dehydro-2-deoxy-D-gluconate (DKGP). The polypeptide is 5-dehydro-2-deoxygluconokinase (iolC) (Bacillus subtilis (strain 168)).